Reading from the N-terminus, the 639-residue chain is Complex I assembly factor Egm, mitochondrial (639 aa).

A mitochondrion-targeting transit peptide spans 1–26 (MRPNLFSGASRLLTYSRNGKLLTRGR). The tract at residues 23-65 (TRGRSTKATSSSLDSQHQDAATTEGGRAESVEESPEQQRKLPT) is disordered. Over residues 28-43 (TKATSSSLDSQHQDAA) the composition is skewed to polar residues. Residues 48–65 (GRAESVEESPEQQRKLPT) are compositionally biased toward basic and acidic residues.

It belongs to the acyl-CoA dehydrogenase family. In terms of assembly, associates with mitochondrial complex I assembly intermediates during its biogenesis. It depends on FAD as a cofactor.

The protein resides in the mitochondrion. In terms of biological role, as part of the MCIA complex, primarily participates in the assembly of the mitochondrial complex I and therefore plays a role in oxidative phosphorylation. The chain is Complex I assembly factor Egm, mitochondrial from Drosophila melanogaster (Fruit fly).